The primary structure comprises 244 residues: Lytic polysaccharide monooxygenase-like protein ANIA_04702 (244 aa).

The signal sequence occupies residues 1–23 (MLMSTSPSPWLAAAMLCIGLANA). His24 is a binding site for Cu(2+). His24 carries the post-translational modification Methylhistidine. N-linked (GlcNAc...) asparagine glycans are attached at residues Asn57, Asn80, Asn118, Asn159, Asn192, and Asn198. Intrachain disulfides connect Cys72/Cys177 and Cys142/Cys196. Residue Asn215 is the site of GPI-anchor amidated asparagine attachment. The propeptide at 216-244 (AGLEAVTVPSFLTAVVPTFLGIAYGLLMA) is removed in mature form.

It belongs to the X325 family. It depends on Cu(2+) as a cofactor. The catalytically essential N-terminal histidine His-24 is post-translationally modified by methylation to prevent protonation of the histidine side chain, and protect the critical active site of the enzyme from oxidative damage.

The protein localises to the cell membrane. Functionally, lytic polysaccharide monooxygenase-like protein that has diverged to biological functions other than polysaccharide degradation since it does not perform oxidative cleavage of polysaccharides. Acts as a cell surface-bound protein that functions in the copper-accumulation pathway. May also act as the major cell wall sensor that regulates MAP kinase-dependent hyphal anastomosis, the fusion of hyphal cells. This is Lytic polysaccharide monooxygenase-like protein ANIA_04702 from Emericella nidulans (strain FGSC A4 / ATCC 38163 / CBS 112.46 / NRRL 194 / M139) (Aspergillus nidulans).